Reading from the N-terminus, the 260-residue chain is Troponin I 3 (260 aa).

The segment covering 192–219 has biased composition (basic and acidic residues); that stretch reads DLDEIMAKKKGTADGKPEWSKKEKKEEE. The tract at residues 192–260 is disordered; that stretch reads DLDEIMAKKK…EEEEEEEEEE (69 aa). A compositionally biased stretch (acidic residues) spans 231–260; the sequence is PEAEPEPEAAEPAAEEPEAEEEEEEEEEEE.

It belongs to the troponin I family. In terms of tissue distribution, expressed in body wall muscle from first larval stage to adult. In adults expression is predominantly in vulval and anal muscles, body wall muscle expression is weaker. Also expressed in vulval muscles of hermaphrodites and the sex muscles of males.

In terms of biological role, troponin I is the inhibitory subunit of troponin, the thin filament regulatory complex which confers calcium-sensitivity to muscle actomyosin ATPase activity. In Caenorhabditis elegans, this protein is Troponin I 3 (tni-3).